A 369-amino-acid polypeptide reads, in one-letter code: Anhydro-N-acetylmuramic acid kinase (369 aa).

ATP is bound at residue 12 to 19; that stretch reads GTSMDGVD.

This sequence belongs to the anhydro-N-acetylmuramic acid kinase family.

The enzyme catalyses 1,6-anhydro-N-acetyl-beta-muramate + ATP + H2O = N-acetyl-D-muramate 6-phosphate + ADP + H(+). The protein operates within amino-sugar metabolism; 1,6-anhydro-N-acetylmuramate degradation. It participates in cell wall biogenesis; peptidoglycan recycling. Functionally, catalyzes the specific phosphorylation of 1,6-anhydro-N-acetylmuramic acid (anhMurNAc) with the simultaneous cleavage of the 1,6-anhydro ring, generating MurNAc-6-P. Is required for the utilization of anhMurNAc either imported from the medium or derived from its own cell wall murein, and thus plays a role in cell wall recycling. This is Anhydro-N-acetylmuramic acid kinase from Shewanella baltica (strain OS155 / ATCC BAA-1091).